The primary structure comprises 35 residues: Kappa-theraphotoxin-Gr1b (35 aa).

3 cysteine pairs are disulfide-bonded: cysteine 2/cysteine 16, cysteine 9/cysteine 21, and cysteine 15/cysteine 28. The tract at residues tyrosine 4–phenylalanine 6 is involved in active face.

This sequence belongs to the neurotoxin 10 (Hwtx-1) family. 09 (HaTx) subfamily. As to expression, expressed by the venom gland.

The protein resides in the secreted. In terms of biological role, inhibitor of voltage-gated potassium channels. Inhibits Kv2.1/KCNB1 channels, by shifting activation of the channel to more depolarized voltages. The toxin binding sites may be situated on the S3-S4 extracellular linker of the channel. One, two, three or four toxin molecules may bind the Kv2.1/KCNB1 channel. May need to partition into the membrane in order to bind to the channel. Antibacterial activity is not observed. The sequence is that of Kappa-theraphotoxin-Gr1b from Grammostola rosea (Chilean rose tarantula).